We begin with the raw amino-acid sequence, 475 residues long: Chromosomal replication initiator protein DnaA (475 aa).

A domain I, interacts with DnaA modulators region spans residues 1–71; sequence MTNDTWNEVR…RQLSAHGAGA (71 aa). The tract at residues 71–133 is domain II; sequence ADRVKFTVSP…PAQPRELPGA (63 aa). Residues 107 to 127 are compositionally biased toward low complexity; the sequence is APAPVHHTAPAPAPVAAPAQP. The disordered stretch occupies residues 107-129; that stretch reads APAPVHHTAPAPAPVAAPAQPRE. The segment at 134-355 is domain III, AAA+ region; it reads KLNPNFTFAN…GALTRLFAFA (222 aa). 4 residues coordinate ATP: glycine 178, glycine 180, lysine 181, and threonine 182. The domain IV, binds dsDNA stretch occupies residues 356-475; that stretch reads DLVRREVTVD…AELLRRTLEA (120 aa).

The protein belongs to the DnaA family. Oligomerizes as a right-handed, spiral filament on DNA at oriC.

The protein resides in the cytoplasm. Functionally, plays an essential role in the initiation and regulation of chromosomal replication. ATP-DnaA binds to the origin of replication (oriC) to initiate formation of the DNA replication initiation complex once per cell cycle. Binds the DnaA box (a 9 base pair repeat at the origin) and separates the double-stranded (ds)DNA. Forms a right-handed helical filament on oriC DNA; dsDNA binds to the exterior of the filament while single-stranded (ss)DNA is stabiized in the filament's interior. The ATP-DnaA-oriC complex binds and stabilizes one strand of the AT-rich DNA unwinding element (DUE), permitting loading of DNA polymerase. After initiation quickly degrades to an ADP-DnaA complex that is not apt for DNA replication. Binds acidic phospholipids. This is Chromosomal replication initiator protein DnaA from Jannaschia sp. (strain CCS1).